The chain runs to 259 residues: Acyl-[acyl-carrier-protein]--UDP-N-acetylglucosamine O-acyltransferase (259 aa).

It belongs to the transferase hexapeptide repeat family. LpxA subfamily. Homotrimer.

The protein localises to the cytoplasm. The catalysed reaction is a (3R)-hydroxyacyl-[ACP] + UDP-N-acetyl-alpha-D-glucosamine = a UDP-3-O-[(3R)-3-hydroxyacyl]-N-acetyl-alpha-D-glucosamine + holo-[ACP]. It participates in glycolipid biosynthesis; lipid IV(A) biosynthesis; lipid IV(A) from (3R)-3-hydroxytetradecanoyl-[acyl-carrier-protein] and UDP-N-acetyl-alpha-D-glucosamine: step 1/6. In terms of biological role, involved in the biosynthesis of lipid A, a phosphorylated glycolipid that anchors the lipopolysaccharide to the outer membrane of the cell. The sequence is that of Acyl-[acyl-carrier-protein]--UDP-N-acetylglucosamine O-acyltransferase from Psychrobacter sp. (strain PRwf-1).